A 457-amino-acid chain; its full sequence is Glycoprotein endo-alpha-1,2-mannosidase-like protein (457 aa).

The Cytoplasmic segment spans residues M1–A8. The chain crosses the membrane as a helical; Signal-anchor for type II membrane protein span at residues C9–L29. At K30–M457 the chain is on the lumenal side. A disordered region spans residues P46–P93. Positions G53 to A64 are enriched in low complexity. The segment covering P65–A87 has biased composition (pro residues).

It belongs to the glycosyl hydrolase 99 family.

It localises to the golgi apparatus membrane. The sequence is that of Glycoprotein endo-alpha-1,2-mannosidase-like protein (MANEAL) from Homo sapiens (Human).